Consider the following 154-residue polypeptide: Sec-independent protein translocase protein TatB (154 aa).

A helical membrane pass occupies residues 1–21; it reads MIDIGITKLAIIGGIALIVIG.

This sequence belongs to the TatB family. In terms of assembly, the Tat system comprises two distinct complexes: a TatABC complex, containing multiple copies of TatA, TatB and TatC subunits, and a separate TatA complex, containing only TatA subunits. Substrates initially bind to the TatABC complex, which probably triggers association of the separate TatA complex to form the active translocon.

Its subcellular location is the cell inner membrane. Its function is as follows. Part of the twin-arginine translocation (Tat) system that transports large folded proteins containing a characteristic twin-arginine motif in their signal peptide across membranes. Together with TatC, TatB is part of a receptor directly interacting with Tat signal peptides. TatB may form an oligomeric binding site that transiently accommodates folded Tat precursor proteins before their translocation. The chain is Sec-independent protein translocase protein TatB from Albidiferax ferrireducens (strain ATCC BAA-621 / DSM 15236 / T118) (Rhodoferax ferrireducens).